The chain runs to 330 residues: Phosphate acyltransferase (330 aa).

The protein belongs to the PlsX family. In terms of assembly, homodimer. Probably interacts with PlsY.

It localises to the cytoplasm. The enzyme catalyses a fatty acyl-[ACP] + phosphate = an acyl phosphate + holo-[ACP]. It participates in lipid metabolism; phospholipid metabolism. Catalyzes the reversible formation of acyl-phosphate (acyl-PO(4)) from acyl-[acyl-carrier-protein] (acyl-ACP). This enzyme utilizes acyl-ACP as fatty acyl donor, but not acyl-CoA. The polypeptide is Phosphate acyltransferase (Bacillus cereus (strain AH820)).